The primary structure comprises 134 residues: Transcription antitermination protein NusB (134 aa).

The protein belongs to the NusB family.

In terms of biological role, involved in transcription antitermination. Required for transcription of ribosomal RNA (rRNA) genes. Binds specifically to the boxA antiterminator sequence of the ribosomal RNA (rrn) operons. This is Transcription antitermination protein NusB from Shewanella sediminis (strain HAW-EB3).